Consider the following 170-residue polypeptide: Cathelicidin antimicrobial peptide (170 aa).

The N-terminal stretch at 1-30 (MKTQRDGPSLGRWSLLLLLLGLTMPLAVIG) is a signal peptide. Residues 31-131 (RVLSYQEAVL…DISCDKDKRK (101 aa)) constitute a propeptide, cathelin-like domain (CLD). Residues 31–131 (RVLSYQEAVL…DISCDKDKRK (101 aa)) form a cathelin-like domain (CLD) region. Cystine bridges form between Cys-86/Cys-97 and Cys-108/Cys-125. The interval 150 to 162 (LKKIGQKIKDFFG) is active core.

This sequence belongs to the cathelicidin family. As to quaternary structure, monomer, homodimer or homotrimer (in vitro). Oligomerizes as tetra- or hexamer in solution (in vitro). Post-translationally, proteolytically cleaved by proteinase PRTN3 into antibacterial peptide LL-37. Proteolytically cleaved by cathepsin CTSG and neutrophil elastase ELANE. In terms of processing, resistant to proteolytic degradation in solution, and when bound to both zwitterionic (mimicking mammalian membranes) and negatively charged membranes (mimicking bacterial membranes). After secretion onto the skin surface, the CAMP gene product is processed by a serine protease-dependent mechanism into multiple novel antimicrobial peptides distinct from and shorter than cathelicidin LL-37. These peptides show enhanced antimicrobial action, acquiring the ability to kill skin pathogens such as S.aureus, E.coli and C.albicans. These peptides have lost the ability to stimulate CXCL8/IL8 release from keratinocytes. The peptides act synergistically, killing bacteria at lower concentrations when present together, and maintain activity at increased salt condition.

It is found in the secreted. The protein resides in the vesicle. Antimicrobial protein that is an integral component of the innate immune system. Binds to bacterial lipopolysaccharides (LPS). Acts via neutrophil N-formyl peptide receptors to enhance the release of CXCL2. Postsecretory processing generates multiple cathelicidin antimicrobial peptides with various lengths which act as a topical antimicrobial defense in sweat on skin. The unprocessed precursor form, cathelicidin antimicrobial peptide, inhibits the growth of Gram-negative E.coli and E.aerogenes with efficiencies comparable to that of the mature peptide LL-37 (in vitro). In terms of biological role, antimicrobial peptide that is an integral component of the innate immune system. Binds to bacterial lipopolysaccharides (LPS). Causes membrane permeabilization by forming transmembrane pores (in vitro). Causes lysis of E.coli. Exhibits antimicrobial activity against Gram-negative bacteria such as P.aeruginosa, S.typhimurium, E.aerogenes, E.coli and P.syringae, Gram-positive bacteria such as L.monocytogenes, S.epidermidis, S.pyogenes and S.aureus, as well as vancomycin-resistant enterococci (in vitro). Exhibits antimicrobial activity against methicillin-resistant S.aureus, P.mirabilis, and C.albicans in low-salt media, but not in media containing 100 mM NaCl (in vitro). Forms chiral supramolecular assemblies with quinolone signal (PQS) molecules of P.aeruginosa, which may lead to interference of bacterial quorum signaling and perturbance of bacterial biofilm formation. May form supramolecular fiber-like assemblies on bacterial membranes. Induces cytokine and chemokine producation as well as TNF/TNFA and CSF2/GMCSF production in normal human keratinocytes. Exhibits hemolytic activity against red blood cells. Functionally, exhibits antimicrobial activity against E.coli and B.megaterium (in vitro). In Saguinus oedipus (Cotton-top tamarin), this protein is Cathelicidin antimicrobial peptide.